We begin with the raw amino-acid sequence, 2508 residues long: Male gametocyte surface protein P230p (2508 aa).

The N-terminal stretch at 1 to 34 (MFIYLFIYLFFKMDKKRTFYYLFFFFTFLVYVLY) is a signal peptide. 4 N-linked (GlcNAc...) asparagine glycosylation sites follow: Asn-230, Asn-254, Asn-362, and Asn-414. The 123-residue stretch at 394-516 (KILGLSTNEK…GLGETSVDKD (123 aa)) folds into the 6-Cys 1 domain. The cysteines at positions 443 and 493 are disulfide-linked. Asn-601 and Asn-674 each carry an N-linked (GlcNAc...) asparagine glycan. 6-Cys domains lie at 676 to 800 (SVSF…IVKR), 831 to 1096 (ITYL…LKSF), 1099 to 1231 (PIEG…LELN), 1268 to 1428 (KKHI…IPQH), and 1433 to 1565 (KFYG…NEDI). Cys-680 and Cys-700 form a disulfide bridge. Asn-703 carries N-linked (GlcNAc...) asparagine glycosylation. Intrachain disulfides connect Cys-714–Cys-775 and Cys-725–Cys-773. Residues Asn-779, Asn-849, Asn-986, Asn-995, Asn-1065, and Asn-1074 are each glycosylated (N-linked (GlcNAc...) asparagine). Disulfide bonds link Cys-835/Cys-856 and Cys-871/Cys-1072. 3 disulfides stabilise this stretch: Cys-1103-Cys-1129, Cys-1144-Cys-1206, and Cys-1157-Cys-1204. A glycan (N-linked (GlcNAc...) asparagine) is linked at Asn-1231. 5 cysteine pairs are disulfide-bonded: Cys-1272–Cys-1293, Cys-1308–Cys-1404, Cys-1437–Cys-1464, Cys-1478–Cys-1547, and Cys-1488–Cys-1545. Residue Asn-1385 is glycosylated (N-linked (GlcNAc...) asparagine). Residues Asn-1525, Asn-1550, Asn-1567, Asn-1750, Asn-1755, and Asn-1788 are each glycosylated (N-linked (GlcNAc...) asparagine). 2 6-Cys domains span residues 1656–1804 (KKKI…IKKN) and 1807–1984 (KILG…IVGD). An intrachain disulfide couples Cys-1704 to Cys-1782. Cystine bridges form between Cys-1811/Cys-1883, Cys-1897/Cys-1966, and Cys-1908/Cys-1964. N-linked (GlcNAc...) asparagine glycans are attached at residues Asn-2016 and Asn-2047. The segment at 2081–2113 (SDEGDGYQADEDIGGEDDAEDVDGEGDDEDDNI) is disordered. Positions 2082-2112 (DEGDGYQADEDIGGEDDAEDVDGEGDDEDDN) are enriched in acidic residues. N-linked (GlcNAc...) asparagine glycans are attached at residues Asn-2143, Asn-2211, Asn-2239, and Asn-2255. 6-Cys domains are found at residues 2197–2354 (IINI…VKSN) and 2357–2481 (KIYG…YEPY). 3 disulfides stabilise this stretch: Cys-2361/Cys-2386, Cys-2400/Cys-2461, and Cys-2411/Cys-2459.

Its subcellular location is the cell surface. The protein resides in the cell membrane. Functionally, plays an essential role in male gamete fertility. Required for the binding to erythrocytes and thus, for the formation of exflagellation centers. The polypeptide is Male gametocyte surface protein P230p (PFS230P) (Plasmodium falciparum (isolate 3D7)).